Reading from the N-terminus, the 92-residue chain is MSRSLKKGPYIEYKLLKKIEELNKQEAKKTLKTWSRSSTIIPQMIGHTIAVYNGKQFFPVFISDQMVGHKLGEFVPTRNFRSHVKSDRKTKR.

This sequence belongs to the universal ribosomal protein uS19 family.

The protein localises to the plastid. It is found in the chloroplast. Protein S19 forms a complex with S13 that binds strongly to the 16S ribosomal RNA. The polypeptide is Small ribosomal subunit protein uS19c (Gracilaria tenuistipitata var. liui (Red alga)).